Reading from the N-terminus, the 179-residue chain is PP2C-like domain-containing protein R307 (179 aa).

The 176-residue stretch at 1-176 (MNESKRENIQ…DNVSVIIIFF (176 aa)) folds into the PPM-type phosphatase domain.

The protein resides in the virion. This chain is PP2C-like domain-containing protein R307, found in Acanthamoeba polyphaga mimivirus (APMV).